Here is a 174-residue protein sequence, read N- to C-terminus: Methylated-DNA--protein-cysteine methyltransferase (174 aa).

The active-site Nucleophile; methyl group acceptor is C141.

Belongs to the MGMT family.

Its subcellular location is the cytoplasm. The catalysed reaction is a 6-O-methyl-2'-deoxyguanosine in DNA + L-cysteinyl-[protein] = S-methyl-L-cysteinyl-[protein] + a 2'-deoxyguanosine in DNA. The enzyme catalyses a 4-O-methyl-thymidine in DNA + L-cysteinyl-[protein] = a thymidine in DNA + S-methyl-L-cysteinyl-[protein]. Functionally, involved in the cellular defense against the biological effects of O6-methylguanine (O6-MeG) and O4-methylthymine (O4-MeT) in DNA. Repairs the methylated nucleobase in DNA by stoichiometrically transferring the methyl group to a cysteine residue in the enzyme. This is a suicide reaction: the enzyme is irreversibly inactivated. This Thermococcus kodakarensis (strain ATCC BAA-918 / JCM 12380 / KOD1) (Pyrococcus kodakaraensis (strain KOD1)) protein is Methylated-DNA--protein-cysteine methyltransferase.